The primary structure comprises 138 residues: Larval cuticle protein 1 (138 aa).

A signal peptide spans 1 to 16; the sequence is MFKFVMVFAVLGVAAA. In terms of domain architecture, Chitin-binding type R&amp;R spans 49–110; the sequence is ADGFDADLLV…PVGAVLPTPP (62 aa).

Component of the larval cuticle. This Drosophila miranda (Fruit fly) protein is Larval cuticle protein 1 (Lcp1).